Reading from the N-terminus, the 213-residue chain is Probable nicotinate-nucleotide adenylyltransferase (213 aa).

The interval 194–213 (RKPNNGEAKDGDVKDEEAVR) is disordered. The segment covering 200 to 213 (EAKDGDVKDEEAVR) has biased composition (basic and acidic residues).

It belongs to the NadD family.

It carries out the reaction nicotinate beta-D-ribonucleotide + ATP + H(+) = deamido-NAD(+) + diphosphate. The protein operates within cofactor biosynthesis; NAD(+) biosynthesis; deamido-NAD(+) from nicotinate D-ribonucleotide: step 1/1. Functionally, catalyzes the reversible adenylation of nicotinate mononucleotide (NaMN) to nicotinic acid adenine dinucleotide (NaAD). The protein is Probable nicotinate-nucleotide adenylyltransferase of Mycolicibacterium smegmatis (strain ATCC 700084 / mc(2)155) (Mycobacterium smegmatis).